The sequence spans 301 residues: Acetyl-coenzyme A carboxylase carboxyl transferase subunit beta (301 aa).

The region spanning 29–298 (LWVKCPETGQ…AEPAEEEAEP (270 aa)) is the CoA carboxyltransferase N-terminal domain.

It belongs to the AccD/PCCB family. As to quaternary structure, acetyl-CoA carboxylase is a heterohexamer composed of biotin carboxyl carrier protein (AccB), biotin carboxylase (AccC) and two subunits each of ACCase subunit alpha (AccA) and ACCase subunit beta (AccD).

Its subcellular location is the cytoplasm. The catalysed reaction is N(6)-carboxybiotinyl-L-lysyl-[protein] + acetyl-CoA = N(6)-biotinyl-L-lysyl-[protein] + malonyl-CoA. It participates in lipid metabolism; malonyl-CoA biosynthesis; malonyl-CoA from acetyl-CoA: step 1/1. In terms of biological role, component of the acetyl coenzyme A carboxylase (ACC) complex. Biotin carboxylase (BC) catalyzes the carboxylation of biotin on its carrier protein (BCCP) and then the CO(2) group is transferred by the transcarboxylase to acetyl-CoA to form malonyl-CoA. The polypeptide is Acetyl-coenzyme A carboxylase carboxyl transferase subunit beta (Methylobacterium nodulans (strain LMG 21967 / CNCM I-2342 / ORS 2060)).